Consider the following 278-residue polypeptide: tRNA (guanine-N(7)-)-methyltransferase (278 aa).

Residues Gly-95, 118-119 (EI), 153-154 (NA), and Cys-173 contribute to the S-adenosyl-L-methionine site. Asp-176 is a catalytic residue. 251 to 253 (TEE) is an S-adenosyl-L-methionine binding site.

This sequence belongs to the class I-like SAM-binding methyltransferase superfamily. TrmB family. Forms a complex with TRM82.

The protein localises to the nucleus. The catalysed reaction is guanosine(46) in tRNA + S-adenosyl-L-methionine = N(7)-methylguanosine(46) in tRNA + S-adenosyl-L-homocysteine. It functions in the pathway tRNA modification; N(7)-methylguanine-tRNA biosynthesis. Catalyzes the formation of N(7)-methylguanine at position 46 (m7G46) in tRNA. This chain is tRNA (guanine-N(7)-)-methyltransferase, found in Kluyveromyces lactis (strain ATCC 8585 / CBS 2359 / DSM 70799 / NBRC 1267 / NRRL Y-1140 / WM37) (Yeast).